The following is an 89-amino-acid chain: Small ribosomal subunit protein uS15 (89 aa).

The protein belongs to the universal ribosomal protein uS15 family. In terms of assembly, part of the 30S ribosomal subunit. Forms a bridge to the 50S subunit in the 70S ribosome, contacting the 23S rRNA.

Functionally, one of the primary rRNA binding proteins, it binds directly to 16S rRNA where it helps nucleate assembly of the platform of the 30S subunit by binding and bridging several RNA helices of the 16S rRNA. Forms an intersubunit bridge (bridge B4) with the 23S rRNA of the 50S subunit in the ribosome. This chain is Small ribosomal subunit protein uS15, found in Chromohalobacter salexigens (strain ATCC BAA-138 / DSM 3043 / CIP 106854 / NCIMB 13768 / 1H11).